Here is a 471-residue protein sequence, read N- to C-terminus: RuvB-like protein 2 (471 aa).

Position 75 to 82 (G75 to T82) interacts with ATP.

The protein belongs to the RuvB family. In terms of assembly, probably forms a homohexamer. Interacts with RVB1 and may form heterododecamers with RVB1. Component of the SWR1 chromatin remodeling complex composed of at least ACT1, ARP4, RVB1, RVB2, ARP6, YAF9, VPS71, VPS72, SWC3, SWC4, SWC5, SWC7 and SWR1, and perhaps BDF1. Component of the chromatin-remodeling INO80 complex, at least composed of ARP4, ARP5, ARP8, RVB1, RVB2, TAF14, NHP10, IES1, IES3, IES4, IES6, ACT1, IES2, IES5 and INO80. Also belongs to the R2TP complex composed of at least RVB1, RVB2, TAH1 and PIH1. Interacts with SPT15/TBP.

It is found in the nucleus. The protein localises to the nucleoplasm. The catalysed reaction is ATP + H2O = ADP + phosphate + H(+). DNA helicase which participates in several chromatin remodeling complexes, including the SWR1 and the INO80 complexes. The SWR1 complex mediates the ATP-dependent exchange of histone H2A for the H2A variant HZT1 leading to transcriptional regulation of selected genes by chromatin remodeling. The INO80 complex remodels chromatin by shifting nucleosomes. Its ability to induce transcription of some phosphate-responsive genes is modulated by inositol polyphosphates. The INO80 complex is involved in DNA repair by associating to 'Ser-129' phosphorylated H2A histones as a response to DNA damage. During transcription may recruit SPT15/TBP to the TATA-boxes of involved genes. Required for box C/D and box H/ACA snoRNA accumulation and involved in pre-rRNA processing. The sequence is that of RuvB-like protein 2 (RVB2) from Saccharomyces cerevisiae (strain ATCC 204508 / S288c) (Baker's yeast).